The chain runs to 141 residues: Hemoglobin subunit alpha (141 aa).

Residues 1–141 (VLSSTDKSNV…VSTVLTSKYR (141 aa)) form the Globin domain. Serine 3 bears the Phosphoserine mark. N6-succinyllysine is present on residues lysine 7 and lysine 11. Lysine 16 carries the N6-acetyllysine; alternate modification. An N6-succinyllysine; alternate modification is found at lysine 16. Tyrosine 24 is modified (phosphotyrosine). Serine 35 carries the phosphoserine modification. Lysine 40 carries the N6-succinyllysine modification. O2 is bound at residue histidine 58. Residue histidine 87 coordinates heme b. Serine 102 is subject to Phosphoserine. Threonine 108 carries the phosphothreonine modification. Residues serine 124 and serine 131 each carry the phosphoserine modification. A phosphothreonine mark is found at threonine 134 and threonine 137. At serine 138 the chain carries Phosphoserine.

The protein belongs to the globin family. In terms of assembly, heterotetramer of two alpha chains and two beta chains. Red blood cells.

Its function is as follows. Involved in oxygen transport from the lung to the various peripheral tissues. Hemopressin acts as an antagonist peptide of the cannabinoid receptor CNR1. Hemopressin-binding efficiently blocks cannabinoid receptor CNR1 and subsequent signaling. This is Hemoglobin subunit alpha from Pteropus vampyrus (Large flying fox).